Consider the following 52-residue polypeptide: DNA-directed RNA polymerase subunit Rpo12 (52 aa).

3 residues coordinate Zn(2+): C13, C30, and C33.

The protein belongs to the archaeal Rpo12/eukaryotic RPC10 RNA polymerase subunit family. As to quaternary structure, part of the RNA polymerase complex. Zn(2+) is required as a cofactor.

Its subcellular location is the cytoplasm. It catalyses the reaction RNA(n) + a ribonucleoside 5'-triphosphate = RNA(n+1) + diphosphate. DNA-dependent RNA polymerase (RNAP) catalyzes the transcription of DNA into RNA using the four ribonucleoside triphosphates as substrates. This chain is DNA-directed RNA polymerase subunit Rpo12, found in Pyrobaculum neutrophilum (strain DSM 2338 / JCM 9278 / NBRC 100436 / V24Sta) (Thermoproteus neutrophilus).